A 291-amino-acid polypeptide reads, in one-letter code: Protein ZAR1-like (291 aa).

Positions G103–T152 are disordered. A compositionally biased stretch (low complexity) spans T106–R115. A compositionally biased stretch (basic and acidic residues) spans T116–R129. The 3CxxC-type zinc-finger motif lies at L195–K280.

Belongs to the ZAR1 family. Interacts with YBX2. In terms of tissue distribution, expressed in oocytes and zygotes. Predominantly expressed in maturing oocytes before maternal-to-zygotic transition (MZT). Less abundant than Zar1.

It localises to the cytoplasm. Its subcellular location is the cytoplasmic ribonucleoprotein granule. MRNA-binding protein required for maternal mRNA storage, translation and degradation during oocyte maturation. Probably promotes formation of some phase-separated membraneless compartment that stores maternal mRNAs in oocytes: acts by undergoing liquid-liquid phase separation upon binding to maternal mRNAs. Binds to the 3'-UTR of maternal mRNAs, inhibiting their translation. This Mus musculus (Mouse) protein is Protein ZAR1-like.